A 258-amino-acid polypeptide reads, in one-letter code: Type III pantothenate kinase 1 (258 aa).

6 to 13 is an ATP binding site; that stretch reads DMGNSHIH. Residue 107 to 110 coordinates substrate; it reads GADR. D109 (proton acceptor) is an active-site residue. D130 contributes to the K(+) binding site. Residue T133 coordinates ATP. T185 is a substrate binding site.

Belongs to the type III pantothenate kinase family. In terms of assembly, homodimer. The cofactor is NH4(+). K(+) serves as cofactor.

The protein resides in the cytoplasm. The enzyme catalyses (R)-pantothenate + ATP = (R)-4'-phosphopantothenate + ADP + H(+). It functions in the pathway cofactor biosynthesis; coenzyme A biosynthesis; CoA from (R)-pantothenate: step 1/5. In terms of biological role, catalyzes the phosphorylation of pantothenate (Pan), the first step in CoA biosynthesis. This chain is Type III pantothenate kinase 1, found in Francisella tularensis subsp. tularensis (strain FSC 198).